Consider the following 101-residue polypeptide: Small ribosomal subunit protein uS14 (101 aa).

It belongs to the universal ribosomal protein uS14 family. Part of the 30S ribosomal subunit. Contacts proteins S3 and S10.

Functionally, binds 16S rRNA, required for the assembly of 30S particles and may also be responsible for determining the conformation of the 16S rRNA at the A site. In Klebsiella pneumoniae (strain 342), this protein is Small ribosomal subunit protein uS14.